A 211-amino-acid polypeptide reads, in one-letter code: Uridine kinase (211 aa).

An ATP-binding site is contributed by 12 to 19 (GGSGSGKT).

It belongs to the uridine kinase family.

The protein resides in the cytoplasm. It catalyses the reaction uridine + ATP = UMP + ADP + H(+). The enzyme catalyses cytidine + ATP = CMP + ADP + H(+). It functions in the pathway pyrimidine metabolism; CTP biosynthesis via salvage pathway; CTP from cytidine: step 1/3. It participates in pyrimidine metabolism; UMP biosynthesis via salvage pathway; UMP from uridine: step 1/1. The protein is Uridine kinase of Bacillus licheniformis (strain ATCC 14580 / DSM 13 / JCM 2505 / CCUG 7422 / NBRC 12200 / NCIMB 9375 / NCTC 10341 / NRRL NRS-1264 / Gibson 46).